A 213-amino-acid chain; its full sequence is NADH-quinone oxidoreductase subunit I (213 aa).

4Fe-4S ferredoxin-type domains follow at residues 74–103 (RFIE…METS) and 113–142 (GNYS…HGTE). [4Fe-4S] cluster contacts are provided by cysteine 83, cysteine 86, cysteine 89, cysteine 93, cysteine 122, cysteine 125, cysteine 128, and cysteine 132.

This sequence belongs to the complex I 23 kDa subunit family. NDH-1 is composed of 14 different subunits. Subunits NuoA, H, J, K, L, M, N constitute the membrane sector of the complex. [4Fe-4S] cluster serves as cofactor.

The protein localises to the cell inner membrane. It catalyses the reaction a quinone + NADH + 5 H(+)(in) = a quinol + NAD(+) + 4 H(+)(out). Its function is as follows. NDH-1 shuttles electrons from NADH, via FMN and iron-sulfur (Fe-S) centers, to quinones in the respiratory chain. The immediate electron acceptor for the enzyme in this species is believed to be ubiquinone. Couples the redox reaction to proton translocation (for every two electrons transferred, four hydrogen ions are translocated across the cytoplasmic membrane), and thus conserves the redox energy in a proton gradient. This chain is NADH-quinone oxidoreductase subunit I, found in Campylobacter jejuni subsp. jejuni serotype O:6 (strain 81116 / NCTC 11828).